The chain runs to 53 residues: Dihydrolipoyl dehydrogenase (53 aa).

Residues 35 to 44 and K53 each bind FAD; that span reads EKYPTFGGTC. A disulfide bridge links C44 with C49.

This sequence belongs to the class-I pyridine nucleotide-disulfide oxidoreductase family. In terms of assembly, homodimer. It depends on FAD as a cofactor.

The protein localises to the mitochondrion. It carries out the reaction N(6)-[(R)-dihydrolipoyl]-L-lysyl-[protein] + NAD(+) = N(6)-[(R)-lipoyl]-L-lysyl-[protein] + NADH + H(+). With respect to regulation, lipoamide reduction and the NADH -&gt; NAD reaction are both completely inhibited by copper and cadmium ions. Functionally, lipoamide dehydrogenase is a component of the glycine cleavage system as well as of the alpha-ketoacid dehydrogenase complexes. This enzyme has lipoamide dehydrogenase activity and NADH -&gt; NAD transhydrogenation activity. Also displays some NADH-ferricyanide reductase and NADPH -&gt; NAD transydrogenation activities. The sequence is that of Dihydrolipoyl dehydrogenase from Hymenolepis diminuta (Rat tapeworm).